The sequence spans 312 residues: Methionyl-tRNA formyltransferase (312 aa).

110 to 113 (SLLP) is a (6S)-5,6,7,8-tetrahydrofolate binding site.

This sequence belongs to the Fmt family.

It catalyses the reaction L-methionyl-tRNA(fMet) + (6R)-10-formyltetrahydrofolate = N-formyl-L-methionyl-tRNA(fMet) + (6S)-5,6,7,8-tetrahydrofolate + H(+). In terms of biological role, attaches a formyl group to the free amino group of methionyl-tRNA(fMet). The formyl group appears to play a dual role in the initiator identity of N-formylmethionyl-tRNA by promoting its recognition by IF2 and preventing the misappropriation of this tRNA by the elongation apparatus. The protein is Methionyl-tRNA formyltransferase of Koribacter versatilis (strain Ellin345).